A 464-amino-acid polypeptide reads, in one-letter code: tRNA-2-methylthio-N(6)-dimethylallyladenosine synthase (464 aa).

The MTTase N-terminal domain occupies 19–135 (GSYWITTFGC…LENLLGKVDL (117 aa)). [4Fe-4S] cluster contacts are provided by Cys-28, Cys-64, Cys-98, Cys-170, Cys-174, and Cys-177. The Radical SAM core domain occupies 156 to 394 (RESSICGWVN…DLVEKTARSR (239 aa)). The TRAM domain occupies 396–464 (QRYIDNIESV…PFSLTGELSL (69 aa)).

It belongs to the methylthiotransferase family. MiaB subfamily. As to quaternary structure, monomer. Requires [4Fe-4S] cluster as cofactor.

Its subcellular location is the cytoplasm. It carries out the reaction N(6)-dimethylallyladenosine(37) in tRNA + (sulfur carrier)-SH + AH2 + 2 S-adenosyl-L-methionine = 2-methylsulfanyl-N(6)-dimethylallyladenosine(37) in tRNA + (sulfur carrier)-H + 5'-deoxyadenosine + L-methionine + A + S-adenosyl-L-homocysteine + 2 H(+). Its function is as follows. Catalyzes the methylthiolation of N6-(dimethylallyl)adenosine (i(6)A), leading to the formation of 2-methylthio-N6-(dimethylallyl)adenosine (ms(2)i(6)A) at position 37 in tRNAs that read codons beginning with uridine. This chain is tRNA-2-methylthio-N(6)-dimethylallyladenosine synthase, found in Prochlorococcus marinus (strain MIT 9301).